The sequence spans 339 residues: MKTIRTQTPLRLGLAGGGTDINLYCDKYTGYVLNATISLYIHCTLIKREDGKIIFDSPDTNSYCEYESKEFLGNDGKLDIFKSIYNRIVKDFTKKPLSFSLHTYSDVPSGSGLGGSSTLVVGVIKAFAEWLNLPLGEYEIAKLAYEIEREDLGIVGGAQDQYAATFGGFNFMEFYNNKRVIVNPLRIKNWIASELEARTVLYFTNITREAKDIEEHKKGKLGDEKSLEAMHAIKQDAIKMKEALFRADFGTLAQILGKSWRSKKIISEIVSNDELERIYKLAIDNGAYSGKTSGAGAGGFMFFFVDPTKKYNLIKALRKEQGYVQDFSFTKEGVKSWRI.

17-20 (GGTD) lines the substrate pocket. Residues Ser-57 and 110–116 (GSGLGGS) contribute to the ATP site. Mg(2+)-binding residues include Ser-116 and Glu-148. The active-site Proton acceptor is the Asp-160.

Belongs to the GHMP kinase family.

It carries out the reaction D-glycero-alpha-D-manno-heptose 7-phosphate + ATP = D-glycero-alpha-D-manno-heptose 1,7-bisphosphate + ADP + H(+). The protein operates within nucleotide-sugar biosynthesis; GDP-D-glycero-alpha-D-manno-heptose biosynthesis; GDP-D-glycero-alpha-D-manno-heptose from D-glycero-alpha-D-manno-heptose 7-phosphate: step 1/3. It functions in the pathway capsule biogenesis; capsule polysaccharide biosynthesis. In terms of biological role, catalyzes the phosphorylation of D-glycero-alpha-D-manno-heptose 7-phosphate at the C-1 position to form D-glycero-alpha-D-manno-heptose 1,7-bisphosphate. The chain is D-glycero-alpha-D-manno-heptose 7-phosphate kinase from Campylobacter jejuni subsp. jejuni serotype O:2 (strain ATCC 700819 / NCTC 11168).